The sequence spans 311 residues: Acetyl-coenzyme A carboxylase carboxyl transferase subunit beta (311 aa).

Residues 32 to 299 (LWVKCPVSEE…TSMPAALTPP (268 aa)) enclose the CoA carboxyltransferase N-terminal domain. Residues 291–311 (SMPAALTPPAPDHVVADGGSH) form a disordered region.

It belongs to the AccD/PCCB family. As to quaternary structure, acetyl-CoA carboxylase is a heterohexamer composed of biotin carboxyl carrier protein (AccB), biotin carboxylase (AccC) and two subunits each of ACCase subunit alpha (AccA) and ACCase subunit beta (AccD).

Its subcellular location is the cytoplasm. It catalyses the reaction N(6)-carboxybiotinyl-L-lysyl-[protein] + acetyl-CoA = N(6)-biotinyl-L-lysyl-[protein] + malonyl-CoA. It participates in lipid metabolism; malonyl-CoA biosynthesis; malonyl-CoA from acetyl-CoA: step 1/1. Component of the acetyl coenzyme A carboxylase (ACC) complex. Biotin carboxylase (BC) catalyzes the carboxylation of biotin on its carrier protein (BCCP) and then the CO(2) group is transferred by the transcarboxylase to acetyl-CoA to form malonyl-CoA. The sequence is that of Acetyl-coenzyme A carboxylase carboxyl transferase subunit beta from Maricaulis maris (strain MCS10) (Caulobacter maris).